We begin with the raw amino-acid sequence, 3051 residues long: Biorientation of chromosomes in cell division protein 1-like 1 (3051 aa).

Residues 1 to 33 (MATNPQPQPPPPAPPPPPPQPQPQPPPPPPGPG) are compositionally biased toward pro residues. 5 disordered regions span residues 1-47 (MATN…AGAG), 164-197 (HKEE…SANV), 215-288 (ASAA…CPVE), 301-393 (ILLN…KEDF), and 411-469 (VHTS…VRHA). Residues 34 to 47 (AGPGAGGAGGAGAG) show a composition bias toward gly residues. Positions 215 to 227 (ASAARASTETSNA) are enriched in low complexity. Residues 246–263 (STDKERTSEDMADKEKST) show a composition bias toward basic and acidic residues. Ser-266 carries the post-translational modification Phosphoserine. Over residues 312–393 (SEQKNKSTDK…KTVEGTKEDF (82 aa)) the composition is skewed to basic and acidic residues. The span at 418–443 (SFEEDTEEEVVTSDSMEEGEITSDDE) shows a compositional bias: acidic residues. An N6-acetyllysine modification is found at Lys-473. Phosphoserine occurs at positions 482 and 484. 3 stretches are compositionally biased toward basic and acidic residues: residues 497-527 (IAKE…EKTK), 549-570 (LEPK…EKKV), and 580-653 (SRNV…LERE). The tract at residues 497-1203 (IAKEKEERLL…EKHADHRSTL (707 aa)) is disordered. Phosphoserine is present on residues Ser-635 and Ser-659. Residues Thr-660 and Thr-733 each carry the phosphothreonine modification. Composition is skewed to basic and acidic residues over residues 671-772 (TDTR…EENI), 804-852 (KDGK…KIQK), 866-878 (RRSE…KCDM), 940-966 (KPDK…KPFE), 984-1021 (TQKD…DGHK), and 1028-1075 (SSKD…ENRR). Residue Ser-1077 is modified to Phosphoserine. Composition is skewed to polar residues over residues 1092–1103 (NTLSTPSGSSLQ) and 1135–1148 (SKTQ…SQQD). Phosphoserine occurs at positions 1145 and 1318. Thr-1354 is subject to Phosphothreonine. Disordered stretches follow at residues 1456-1550 (KLKH…QSEV), 1700-1725 (GSIS…ETEG), and 1760-1890 (VVLG…TGLG). Positions 1465 to 1479 (KVKDISIDVERRNEN) are enriched in basic and acidic residues. Over residues 1482–1504 (VDTSAGSGSAPSVLHQRNGQTED) the composition is skewed to polar residues. Phosphoserine occurs at positions 1531, 1701, and 1710. A phosphoserine mark is found at Ser-2013, Ser-2025, Ser-2128, and Ser-2203. Disordered stretches follow at residues 2189–2210 (DFEG…STSK), 2258–2285 (TSSV…TPAE), 2403–2447 (STEE…FAGR), 2472–2519 (EDKS…AKDP), 2615–2635 (DQAS…FPEE), and 2717–3051 (VENS…KAKR). The span at 2191 to 2207 (EGPMPSAPPEAESPLAS) shows a compositional bias: low complexity. The segment covering 2428 to 2439 (AEKEEKHGKECP) has biased composition (basic and acidic residues). Position 2475 is a phosphoserine (Ser-2475). Residues 2483–2492 (GSSTASYSAG) are compositionally biased toward low complexity. A phosphoserine mark is found at Ser-2501 and Ser-2618. Basic and acidic residues-rich tracts occupy residues 2621–2633 (KTGD…KSFP), 2724–2746 (TNEE…KDNA), and 2754–2767 (VEAD…EERH). A compositionally biased stretch (acidic residues) spans 2780–2789 (SEDEPDDNPD). Residues 2791–2822 (LDSRIETAQRQCPETEPHDTKEENSRDLEELP) show a composition bias toward basic and acidic residues. A compositionally biased stretch (polar residues) spans 2823-2834 (KTSSETNSTTSR). The span at 2848–2864 (TGEKPEQNDDDTIKSQE) shows a compositional bias: basic and acidic residues. Residues 2871–2880 (IKRKRGRPRK) show a composition bias toward basic residues. The segment at residues 2872 to 2884 (KRKRGRPRKYPVE) is a DNA-binding region (a.T hook). Over residues 2896–2910 (DTGIVTVEQSPSSSK) the composition is skewed to polar residues. 2 positions are modified to phosphoserine: Ser-2905 and Ser-2907. Positions 2944–2953 (VRRRGRKPKR) are enriched in basic residues. Residue Ser-2954 is modified to Phosphoserine. Thr-2956 carries the post-translational modification Phosphothreonine. A phosphoserine mark is found at Ser-2958, Ser-2964, and Ser-2973. Glycyl lysine isopeptide (Lys-Gly) (interchain with G-Cter in ubiquitin) cross-links involve residues Lys-2981 and Lys-2982. The span at 2985–2998 (ESDEEEEEEEEDEP) shows a compositional bias: acidic residues. Phosphoserine is present on residues Ser-2986 and Ser-3019. The segment covering 3000-3020 (GATTRSTTRSEAQRSKTQLSP) has biased composition (polar residues). Over residues 3039-3051 (QRVEEAPVKKAKR) the composition is skewed to basic and acidic residues.

Belongs to the BOD1 family. In terms of assembly, interacts (via COMPASS-Shg1 domain) with SETD1A at stalled replication forks; this interaction mediates FANCD2-dependent nucleosome remodeling at reversed forks protecting them from nucleolytic degradation.

Its subcellular location is the chromosome. Its function is as follows. Component of the fork protection machinery required to protect stalled/damaged replication forks from uncontrolled DNA2-dependent resection. Acts by stabilizing RAD51 at stalled replication forks and protecting RAD51 nucleofilaments from the antirecombinogenic activities of FBH1 and BLM. Does not regulate spindle orientation. In Homo sapiens (Human), this protein is Biorientation of chromosomes in cell division protein 1-like 1.